Here is a 48-residue protein sequence, read N- to C-terminus: MAKYRCGNCWREFDDEQLRALPGVRCPYCGYKIIYMVRKPTVKVVKAI.

Residues cysteine 9, cysteine 26, and cysteine 29 each coordinate Zn(2+).

The protein belongs to the archaeal Rpo12/eukaryotic RPC10 RNA polymerase subunit family. As to quaternary structure, part of the RNA polymerase complex. The cofactor is Zn(2+).

It localises to the cytoplasm. It catalyses the reaction RNA(n) + a ribonucleoside 5'-triphosphate = RNA(n+1) + diphosphate. DNA-dependent RNA polymerase (RNAP) catalyzes the transcription of DNA into RNA using the four ribonucleoside triphosphates as substrates. This is DNA-directed RNA polymerase subunit Rpo12 from Sulfurisphaera tokodaii (strain DSM 16993 / JCM 10545 / NBRC 100140 / 7) (Sulfolobus tokodaii).